The primary structure comprises 209 residues: Guanylate kinase (209 aa).

Positions 10–189 constitute a Guanylate kinase-like domain; sequence GLLLVLSAPS…AFSDLRSVVV (180 aa). Position 17–24 (17–24) interacts with ATP; the sequence is APSGAGKT.

It belongs to the guanylate kinase family.

It localises to the cytoplasm. The enzyme catalyses GMP + ATP = GDP + ADP. Functionally, essential for recycling GMP and indirectly, cGMP. The polypeptide is Guanylate kinase (Myxococcus xanthus (strain DK1622)).